The primary structure comprises 225 residues: Protein ERP3 (225 aa).

Positions Met1–Pro23 are cleaved as a signal peptide. Residues Leu24 to Ser195 lie on the Lumenal side of the membrane. A GOLD domain is found at Lys33–Tyr172. The segment covering Glu129–Arg138 has biased composition (basic residues). Residues Glu129–Gln149 form a disordered region. Residues Ile196–Ile216 traverse the membrane as a helical segment. Topologically, residues Phe217–Val225 are cytoplasmic.

This sequence belongs to the EMP24/GP25L family.

It localises to the endoplasmic reticulum membrane. In terms of biological role, involved in vesicular protein trafficking. This chain is Protein ERP3 (ERP3), found in Saccharomyces cerevisiae (strain ATCC 204508 / S288c) (Baker's yeast).